The primary structure comprises 394 residues: NAD(P)H-quinone oxidoreductase subunit H (394 aa).

The protein belongs to the complex I 49 kDa subunit family. In terms of assembly, NDH-1 can be composed of about 15 different subunits; different subcomplexes with different compositions have been identified which probably have different functions.

It is found in the cellular thylakoid membrane. It catalyses the reaction a plastoquinone + NADH + (n+1) H(+)(in) = a plastoquinol + NAD(+) + n H(+)(out). The catalysed reaction is a plastoquinone + NADPH + (n+1) H(+)(in) = a plastoquinol + NADP(+) + n H(+)(out). Functionally, NDH-1 shuttles electrons from an unknown electron donor, via FMN and iron-sulfur (Fe-S) centers, to quinones in the respiratory and/or the photosynthetic chain. The immediate electron acceptor for the enzyme in this species is believed to be plastoquinone. Couples the redox reaction to proton translocation, and thus conserves the redox energy in a proton gradient. Cyanobacterial NDH-1 also plays a role in inorganic carbon-concentration. The protein is NAD(P)H-quinone oxidoreductase subunit H of Synechococcus sp. (strain CC9605).